Here is a 367-residue protein sequence, read N- to C-terminus: Dual-specificity RNA methyltransferase RlmN (367 aa).

Glu-91 (proton acceptor) is an active-site residue. The Radical SAM core domain maps to 102–337 (GKVRMTQCLS…AIIRKSKGQD (236 aa)). Cysteines 109 and 342 form a disulfide. Cys-116, Cys-120, and Cys-123 together coordinate [4Fe-4S] cluster. S-adenosyl-L-methionine is bound by residues 169–170 (GE), Ser-201, 223–225 (SLH), and Asn-299. Cys-342 functions as the S-methylcysteine intermediate in the catalytic mechanism.

It belongs to the radical SAM superfamily. RlmN family. [4Fe-4S] cluster serves as cofactor.

It localises to the cytoplasm. It carries out the reaction adenosine(2503) in 23S rRNA + 2 reduced [2Fe-2S]-[ferredoxin] + 2 S-adenosyl-L-methionine = 2-methyladenosine(2503) in 23S rRNA + 5'-deoxyadenosine + L-methionine + 2 oxidized [2Fe-2S]-[ferredoxin] + S-adenosyl-L-homocysteine. It catalyses the reaction adenosine(37) in tRNA + 2 reduced [2Fe-2S]-[ferredoxin] + 2 S-adenosyl-L-methionine = 2-methyladenosine(37) in tRNA + 5'-deoxyadenosine + L-methionine + 2 oxidized [2Fe-2S]-[ferredoxin] + S-adenosyl-L-homocysteine. Functionally, specifically methylates position 2 of adenine 2503 in 23S rRNA and position 2 of adenine 37 in tRNAs. m2A2503 modification seems to play a crucial role in the proofreading step occurring at the peptidyl transferase center and thus would serve to optimize ribosomal fidelity. This chain is Dual-specificity RNA methyltransferase RlmN, found in Nitratidesulfovibrio vulgaris (strain DSM 19637 / Miyazaki F) (Desulfovibrio vulgaris).